Here is a 271-residue protein sequence, read N- to C-terminus: Solute carrier family 66 member 2 (271 aa).

3 consecutive transmembrane segments (helical) span residues 8-28, 49-69, and 76-96; these read WLLV…MVFG, FSTY…LFWF, and PLLW…KLCT. The PQ-loop 1 domain maps to 14 to 80; that stretch reads HQLVSWGAAA…RRFESPLLWQ (67 aa). Ser-110 is modified (phosphoserine). 3 helical membrane-spanning segments follow: residues 145–165, 168–188, and 232–252; these read DYVQ…YLSI, ALFV…LGVP, and VCGL…YAFA. One can recognise a PQ-loop 2 domain in the interval 178-233; that stretch reads AVLTEAMLGVPQLYRNHRHQSTEGMSIKMVLMWTSGDAFKTAYFLLKGAPLQFSVC.

It localises to the membrane. This chain is Solute carrier family 66 member 2, found in Homo sapiens (Human).